The chain runs to 359 residues: Alpha-N-acetylneuraminide alpha-2,8-sialyltransferase (359 aa).

The Cytoplasmic segment spans residues 1–28; it reads MWGRWRGAGGRRGVAQPVIPQMKLLGGR. The chain crosses the membrane as a helical; Signal-anchor for type II membrane protein span at residues 29–49; it reads VPLGASALGLLIVCWFYIFPG. Topologically, residues 50–359 are lumenal; it reads GERLPGHKEM…KKDVSSKKPH (310 aa). Residues N73 and N121 are each glycosylated (N-linked (GlcNAc...) asparagine). Cystine bridges form between C140–C289 and C154–C349. CMP-N-acetyl-beta-neuraminate-binding residues include N145 and N168. N-linked (GlcNAc...) asparagine glycosylation is present at N247. 5 residues coordinate CMP-N-acetyl-beta-neuraminate: S276, T277, G278, W298, and H312. The active-site Proton donor/acceptor is the H324.

Belongs to the glycosyltransferase 29 family. In terms of tissue distribution, expressed in the dorsal blastopore lip and in the presumptive neuroectoderm in stage 11 embryos. During gastrulation, strongly expressed in the involuting mesoderm. At stages 13 and 16, expressed in the neural plate and neural fold, paraxial mesoderm and notochord. At stages 19 and 22 (neural tube and early tailbud), strongly expressed in the neural tube and notochord. At the tadpole stage, expressed in the head region, branchial arches and otic and optic primordia. Also localized in the notochord and weakly expressed in the somites. In adults, expressed in the brain and ovary. Isoform 2 (short) is expressed at a low level in the adult testis and muscle, and at a high level in the skin. Isoform 1 (long) is expressed at a high level in the adult lung and kidney. Both isoforms 1 and 2 are expressed in the gut and liver.

The protein localises to the golgi apparatus membrane. The enzyme catalyses an N-acetyl-alpha-neuraminyl-(2-&gt;3)-beta-D-galactosyl derivative + CMP-N-acetyl-beta-neuraminate = an N-acetyl-alpha-neuraminyl-(2-&gt;8)-N-acetyl-alpha-neuraminyl-(2-&gt;3)-beta-D-galactosyl derivative + CMP + H(+). The catalysed reaction is a ganglioside GM3 (d18:1(4E)) + CMP-N-acetyl-beta-neuraminate = a ganglioside GD3 (d18:1(4E)) + CMP + H(+). It catalyses the reaction a ganglioside GD3 (d18:1(4E)) + CMP-N-acetyl-beta-neuraminate = a ganglioside GT3 (d18:1(4E)) + CMP + H(+). It carries out the reaction a ganglioside GD1a (d18:1(4E)) + CMP-N-acetyl-beta-neuraminate = a ganglioside GT1a (d18:1(4E)) + CMP + H(+). The enzyme catalyses a ganglioside GT1b (d18:1(4E)) + CMP-N-acetyl-beta-neuraminate = a ganglioside GQ1b (d18:1(4E)) + CMP + H(+). The catalysed reaction is a ganglioside GM1b (d18:1(4E)) + CMP-N-acetyl-beta-neuraminate = a ganglioside GD1c (d18:1(4E)) + CMP + H(+). It catalyses the reaction a ganglioside GD3 + CMP-N-acetyl-beta-neuraminate = a ganglioside GT3 + CMP + H(+). It carries out the reaction [alpha-N-acetylneuraminyl-(2-&gt;8)](n)-alpha-N-acetylneuraminyl-(2-&gt;8)-alpha-N-acetylneuraminyl-(2-&gt;3)-beta-D-galactosyl-(1-&gt;4)-beta-D-glucosyl-(1&lt;-&gt;1)-ceramide + CMP-N-acetyl-beta-neuraminate = [alpha-N-acetylneuraminyl-(2-&gt;8)](n+1)-alpha-N-acetylneuraminyl-(2-&gt;8)-alpha-N-acetylneuraminyl-(2-&gt;3)-beta-D-galactosyl-(1-&gt;4)-beta-D-glucosyl-(1&lt;-&gt;1)-ceramide + CMP + H(+). It participates in protein modification; protein glycosylation. It functions in the pathway lipid metabolism; sphingolipid metabolism. In terms of biological role, catalyzes the addition of sialic acid in alpha 2,8-linkage to the sialic acid moiety of the ganglioside GM3 to form ganglioside GD3; gangliosides are a subfamily of complex glycosphingolipds that contain one or more residues of sialic acid. Glycosphingolipids are required for convergence extension movements during early development. Can catalyze the addition of a second alpha-2,8- sialic acid to GD3 to form GT3. Can use GM1b, GD1a and GT1b as acceptor substrates to synthesize GD1c, GT1a and GQ1b respectively. The polypeptide is Alpha-N-acetylneuraminide alpha-2,8-sialyltransferase (Xenopus laevis (African clawed frog)).